The chain runs to 314 residues: Vomeronasal type-1 receptor 95 (314 aa).

The Extracellular segment spans residues 1-18; it reads MNKDNTLYCSAYRIAFFS. Residues 19 to 39 traverse the membrane as a helical segment; sequence EIGIGISANSCLLLFHTFMFI. Residues 40 to 48 are Cytoplasmic-facing; sequence RGHRPRLTD. The helical transmembrane segment at 49–69 threads the bilayer; it reads LPIGLVALIHLVMLLLAAYIT. Over 70-88 the chain is Extracellular; sequence EDFFMSSGGWDDITCKLFI. C84 and C171 are oxidised to a cystine. A helical membrane pass occupies residues 89–113; the sequence is FLHRFFRSLSVCDTCMLSVFQAIIL. Topologically, residues 114-133 are cytoplasmic; sequence CPQSSHLAKFKLNSPHHLSC. The helical transmembrane segment at 134 to 154 threads the bilayer; sequence FFIFMSIFYTSISSHILIAAI. The Extracellular portion of the chain corresponds to 155–186; the sequence is ATQNLTSVNLIYITKSCSFLPMSSSMQRTFST. A glycan (N-linked (GlcNAc...) asparagine) is linked at N158. The chain crosses the membrane as a helical span at residues 187 to 207; it reads LLAFRNVFLIGLMGLSTCYMA. The Cytoplasmic segment spans residues 208 to 235; the sequence is TLLCRHKTRSQQLQNSKLSPKATPEQRA. A helical transmembrane segment spans residues 236–256; that stretch reads IWTILMLMSFFLIISTFDSIM. Topologically, residues 257-268 are extracellular; sequence TYSRTIFQGNQS. N266 carries an N-linked (GlcNAc...) asparagine glycan. A helical membrane pass occupies residues 269-289; that stretch reads LYCVQIPVAHGYAAFSPLLVL. The Cytoplasmic segment spans residues 290–314; that stretch reads NNEKRLTSLMISMYDRIVRLESLCS.

Belongs to the G-protein coupled receptor 1 family.

It localises to the cell membrane. Its function is as follows. Putative pheromone receptor implicated in the regulation of social as well as reproductive behavior. This is Vomeronasal type-1 receptor 95 (Vom1r95) from Rattus norvegicus (Rat).